A 394-amino-acid polypeptide reads, in one-letter code: 1-deoxy-D-xylulose 5-phosphate reductoisomerase (394 aa).

T10, G11, S12, I13, G38, R39, N40, and N123 together coordinate NADPH. K124 contributes to the 1-deoxy-D-xylulose 5-phosphate binding site. E125 provides a ligand contact to NADPH. D149 serves as a coordination point for Mn(2+). Residues S150, E151, S175, and H198 each contribute to the 1-deoxy-D-xylulose 5-phosphate site. Position 151 (E151) interacts with Mn(2+). Residue G204 participates in NADPH binding. 1-deoxy-D-xylulose 5-phosphate contacts are provided by S211, N216, K217, and E220. Residue E220 participates in Mn(2+) binding.

It belongs to the DXR family. Requires Mg(2+) as cofactor. It depends on Mn(2+) as a cofactor.

It carries out the reaction 2-C-methyl-D-erythritol 4-phosphate + NADP(+) = 1-deoxy-D-xylulose 5-phosphate + NADPH + H(+). Its pathway is isoprenoid biosynthesis; isopentenyl diphosphate biosynthesis via DXP pathway; isopentenyl diphosphate from 1-deoxy-D-xylulose 5-phosphate: step 1/6. Catalyzes the NADPH-dependent rearrangement and reduction of 1-deoxy-D-xylulose-5-phosphate (DXP) to 2-C-methyl-D-erythritol 4-phosphate (MEP). In Cereibacter sphaeroides (strain ATCC 17023 / DSM 158 / JCM 6121 / CCUG 31486 / LMG 2827 / NBRC 12203 / NCIMB 8253 / ATH 2.4.1.) (Rhodobacter sphaeroides), this protein is 1-deoxy-D-xylulose 5-phosphate reductoisomerase.